The chain runs to 172 residues: Shikimate kinase (172 aa).

Residue 14–19 (GAGKST) participates in ATP binding. Ser18 contacts Mg(2+). 3 residues coordinate substrate: Asp36, Arg60, and Gly82. Arg120 provides a ligand contact to ATP. Arg139 contributes to the substrate binding site. Gln156 contacts ATP.

The protein belongs to the shikimate kinase family. As to quaternary structure, monomer. Mg(2+) is required as a cofactor.

It localises to the cytoplasm. It catalyses the reaction shikimate + ATP = 3-phosphoshikimate + ADP + H(+). The protein operates within metabolic intermediate biosynthesis; chorismate biosynthesis; chorismate from D-erythrose 4-phosphate and phosphoenolpyruvate: step 5/7. In terms of biological role, catalyzes the specific phosphorylation of the 3-hydroxyl group of shikimic acid using ATP as a cosubstrate. This is Shikimate kinase from Vibrio vulnificus (strain CMCP6).